Consider the following 36-residue polypeptide: APQEPVYPGDDATPEQMAKYAAELRRYINRLTRPRY.

At Tyr36 the chain carries Tyrosine amide.

The protein belongs to the NPY family.

It is found in the secreted. Its function is as follows. Hormone secreted by pancreatic cells that acts as a regulator of pancreatic and gastrointestinal functions probably by signaling through the G protein-coupled receptor NPY4R2. The sequence is that of Pancreatic polypeptide (PPY) from Didelphis virginiana (North American opossum).